Here is a 297-residue protein sequence, read N- to C-terminus: Acetylglutamate kinase (297 aa).

Substrate contacts are provided by residues 68–69 (GG), Arg-90, and Asn-195.

It belongs to the acetylglutamate kinase family. ArgB subfamily.

It is found in the cytoplasm. The catalysed reaction is N-acetyl-L-glutamate + ATP = N-acetyl-L-glutamyl 5-phosphate + ADP. It functions in the pathway amino-acid biosynthesis; L-arginine biosynthesis; N(2)-acetyl-L-ornithine from L-glutamate: step 2/4. Its function is as follows. Catalyzes the ATP-dependent phosphorylation of N-acetyl-L-glutamate. The protein is Acetylglutamate kinase of Mesorhizobium japonicum (strain LMG 29417 / CECT 9101 / MAFF 303099) (Mesorhizobium loti (strain MAFF 303099)).